The sequence spans 821 residues: Cation/H(+) antiporter 15 (821 aa).

13 helical membrane passes run 37 to 57, 65 to 82, 97 to 117, 131 to 151, 166 to 186, 200 to 220, 228 to 248, 268 to 288, 292 to 312, 318 to 338, 350 to 370, 378 to 398, and 410 to 430; these read LPLFVLQLTLVVVVTRFFVFI, RVISEILGGIVLGPSVLG, VMVLETMANVGLLYFLFLVGV, ALTIAIGGMVLPFLIGAAFSF, ILFLGVALSVTAFPVLARILA, MSAALVNDMFAWILLALAIAL, FASLWVMISSAVFIAVCVFVV, FHICLILTGVMISGFITDAIG, VFGAFVFGLVIPNGPLGLTLI, FVSGLLLPLFFAISGLKTNIA, FLVIFLACAGKVIGTVIVAFF, GITLGLLLNTKGLVEMIVLNV, and FATMVLVALVMTGVITPIVTI. The tract at residues 800-821 is disordered; sequence DFPESPVHSHETKVTYGLENPR.

Belongs to the monovalent cation:proton antiporter 2 (CPA2) transporter (TC 2.A.37) family. CHX (TC 2.A.37.4) subfamily. As to expression, specifically expressed in pollen.

The protein localises to the membrane. Functionally, may operate as a cation/H(+) antiporter. This is Cation/H(+) antiporter 15 (CHX15) from Arabidopsis thaliana (Mouse-ear cress).